The following is a 131-amino-acid chain: UPF0102 protein YraN (131 aa).

Over residues 1 to 19 the composition is skewed to polar residues; that stretch reads MATVPTRSGSPRQLTTKQT. Residues 1 to 20 are disordered; the sequence is MATVPTRSGSPRQLTTKQTG.

Belongs to the UPF0102 family.

In Escherichia coli (strain 55989 / EAEC), this protein is UPF0102 protein YraN.